The primary structure comprises 325 residues: Large ribosomal subunit protein uL1m (325 aa).

Residues 1–50 constitute a mitochondrion transit peptide; the sequence is MAATVRCFGRVLIHHQRCSLATVTSQTSLYPCCIYVPVPNRHFAAAAKPA. The disordered stretch occupies residues 47–66; sequence AKPAKKTKKGTKEKASNEKK. Residues 56 to 66 show a composition bias toward basic and acidic residues; the sequence is GTKEKASNEKK.

This sequence belongs to the universal ribosomal protein uL1 family.

The protein localises to the mitochondrion. The protein is Large ribosomal subunit protein uL1m (MRPL1) of Bos taurus (Bovine).